The chain runs to 213 residues: HTH-type transcriptional regulator SrpR (213 aa).

The 61-residue stretch at 10-70 (EETRQRIIDA…AVLASRQHPL (61 aa)) folds into the HTH tetR-type domain. Residues 33-52 (TLDQIARKAGVTRGAVYWHF) constitute a DNA-binding region (H-T-H motif).

Functionally, in conjunction with SrpS represses the srpABC operon. The chain is HTH-type transcriptional regulator SrpR (srpR) from Pseudomonas putida (Arthrobacter siderocapsulatus).